A 102-amino-acid polypeptide reads, in one-letter code: Small ribosomal subunit protein uS10 (102 aa).

The protein belongs to the universal ribosomal protein uS10 family. In terms of assembly, part of the 30S ribosomal subunit.

Its function is as follows. Involved in the binding of tRNA to the ribosomes. This is Small ribosomal subunit protein uS10 from Acidothermus cellulolyticus (strain ATCC 43068 / DSM 8971 / 11B).